A 193-amino-acid chain; its full sequence is Probable nicotinate-nucleotide adenylyltransferase (193 aa).

It belongs to the NadD family.

It catalyses the reaction nicotinate beta-D-ribonucleotide + ATP + H(+) = deamido-NAD(+) + diphosphate. The protein operates within cofactor biosynthesis; NAD(+) biosynthesis; deamido-NAD(+) from nicotinate D-ribonucleotide: step 1/1. Catalyzes the reversible adenylation of nicotinate mononucleotide (NaMN) to nicotinic acid adenine dinucleotide (NaAD). The polypeptide is Probable nicotinate-nucleotide adenylyltransferase (Endomicrobium trichonymphae).